Reading from the N-terminus, the 261-residue chain is Enolase-phosphatase E1 (261 aa).

Residues aspartate 16 and glutamate 18 each contribute to the Mg(2+) site. Substrate is bound by residues 153–154 and lysine 187; that span reads SS. Residue aspartate 212 coordinates Mg(2+).

Belongs to the HAD-like hydrolase superfamily. MasA/MtnC family. Monomer. The cofactor is Mg(2+).

The protein localises to the cytoplasm. The protein resides in the nucleus. The catalysed reaction is 5-methylsulfanyl-2,3-dioxopentyl phosphate + H2O = 1,2-dihydroxy-5-(methylsulfanyl)pent-1-en-3-one + phosphate. It participates in amino-acid biosynthesis; L-methionine biosynthesis via salvage pathway; L-methionine from S-methyl-5-thio-alpha-D-ribose 1-phosphate: step 3/6. The protein operates within amino-acid biosynthesis; L-methionine biosynthesis via salvage pathway; L-methionine from S-methyl-5-thio-alpha-D-ribose 1-phosphate: step 4/6. Its function is as follows. Bifunctional enzyme that catalyzes the enolization of 2,3-diketo-5-methylthiopentyl-1-phosphate (DK-MTP-1-P) into the intermediate 2-hydroxy-3-keto-5-methylthiopentenyl-1-phosphate (HK-MTPenyl-1-P), which is then dephosphorylated to form the acireductone 1,2-dihydroxy-3-keto-5-methylthiopentene (DHK-MTPene). The sequence is that of Enolase-phosphatase E1 from Bos taurus (Bovine).